A 1789-amino-acid chain; its full sequence is Protein sprint (1789 aa).

Disordered regions lie at residues 53 to 120, 140 to 190, 218 to 237, 261 to 317, 329 to 378, and 401 to 460; these read TTAN…AHPP, TTTA…DLAN, PLWN…HPTG, QRMH…QAGL, LNNN…DADD, and RRSR…PCDL. Over residues 82-114 the composition is skewed to low complexity; that stretch reads SINNNKNNNISNKNNNNNNNNNNNINNNNNNNN. Polar residues predominate over residues 140–149; it reads TTTANQLQQQ. Residues 176–185 show a composition bias toward acidic residues; it reads PSEEDGDTDA. The segment covering 223 to 233 has biased composition (polar residues); the sequence is RNGNGSTTTHC. A compositionally biased stretch (low complexity) spans 295–317; it reads NNNNINNNHNGQQSQKSQQQAGL. Polar residues predominate over residues 337-361; that stretch reads QPGSMTPASNRTGLDSNQNQKQNLN. Residues 409-418 are compositionally biased toward low complexity; the sequence is QSRTSLVSSS. A compositionally biased stretch (acidic residues) spans 428-445; that stretch reads TSSEDDEEEPVEAEDEGE. The region spanning 473–566 is the SH2 domain; that stretch reads WFLPGIQRSG…ELPVQLMLPR (94 aa). Disordered stretches follow at residues 632–689, 744–787, 852–918, 969–1006, 1040–1067, 1094–1123, and 1138–1160; these read FFSD…SGGQ, TAPE…SANG, GECK…ILES, DLLA…QSLL, AAED…QGSP, RSQM…MLQP, and PKPK…KRAR. Residues 639 to 649 are compositionally biased toward pro residues; that stretch reads KPPPTGAPPLP. Positions 671–686 are enriched in low complexity; that stretch reads TPSDTTNSSLSSFTTS. Residues 857–868 show a composition bias toward polar residues; it reads TLSSQGSSSNDS. Residues 903–914 are compositionally biased toward basic and acidic residues; sequence AGKESQHYKESD. Positions 974-984 are enriched in low complexity; it reads TPSTPTPTQQS. 2 stretches are compositionally biased toward polar residues: residues 994 to 1006 and 1048 to 1065; these read TATP…QSLL and TTPT…SKQG. A compositionally biased stretch (low complexity) spans 1143 to 1154; that stretch reads SQQQQQSQQQQQ. A VPS9 domain is found at 1531–1673; the sequence is RSEDIQLLAQ…LKTFMASEGE (143 aa). The 89-residue stretch at 1689 to 1777 folds into the Ras-associating domain; it reads CSSVLRVIIP…CMLAYKRIDA (89 aa).

Belongs to the RIN (Ras interaction/interference) family. In late cellular blastoderm embryos, it is expressed in the posterior end. Then, as development proceeds, it is expressed in the developing midgut, amnioserosa and in a specific subset of CNS neurons. Isoform 1 is expressed earlier in developing midgut and amnioserosa, but is not expressed in the CNS.

Functionally, potential Ras effector protein. May function as a guanine nucleotide exchange (GEF), by exchanging bound GDP for free GTP. The protein is Protein sprint (spri) of Drosophila melanogaster (Fruit fly).